A 50-amino-acid polypeptide reads, in one-letter code: Insulin (50 aa).

3 disulfide bridges follow: cysteine 7/cysteine 36, cysteine 19/cysteine 49, and cysteine 35/cysteine 40.

Belongs to the insulin family. Heterodimer of a B chain and an A chain linked by two disulfide bonds.

It is found in the secreted. In terms of biological role, insulin decreases blood glucose concentration. It increases cell permeability to monosaccharides, amino acids and fatty acids. It accelerates glycolysis, the pentose phosphate cycle, and glycogen synthesis in liver. This Katsuwonus pelamis (Skipjack tuna) protein is Insulin (ins).